The following is a 777-amino-acid chain: Rho-GTPase-activating protein 8 (777 aa).

The 418-residue stretch at 3 to 420 folds into the F-BAR domain; that stretch reads SSFSNGFWSK…YQEIIQPESD (418 aa). Positions 117-172 form a coiled coil; that stretch reads QKLQTSQQVLTNQIKSYEKKYYTLKKTKSAYYNKCRNLEDYEEESKESNETTSEAI. A DEP domain is found at 213 to 296; sequence VLQEIPLQDY…WKDKAFQFAG (84 aa). Residues 454–650 enclose the Rho-GAP domain; it reads VDVEFLSHRD…DLLTYGPSIF (197 aa). Residues 667–709 form a disordered region; it reads LYQSSATPRSTDVSPTRPDSISSVRSHTAVESPRSSFEELQPS. Polar residues predominate over residues 668-692; it reads YQSSATPRSTDVSPTRPDSISSVRS. A phosphoserine mark is found at serine 676 and serine 680. Residue threonine 682 is modified to Phosphothreonine. At serine 686 the chain carries Phosphoserine. The residue at position 694 (threonine 694) is a Phosphothreonine. Residue serine 698 is modified to Phosphoserine.

As to quaternary structure, interacts with pak1/shk1. Post-translationally, phosphorylated by pak1/shk1.

The protein resides in the cytoplasm. Acts in signal transduction. Negatively regulates the pak1/shk1 control pathway. The chain is Rho-GTPase-activating protein 8 (rga8) from Schizosaccharomyces pombe (strain 972 / ATCC 24843) (Fission yeast).